Reading from the N-terminus, the 299-residue chain is Regucalcin (299 aa).

Glu18 lines the a divalent metal cation pocket. Substrate-binding residues include Arg101, Asn103, and Glu121. Position 144 is an N6-succinyllysine (Lys144). The a divalent metal cation site is built by Asn154 and Asp204. Asp204 functions as the Proton donor/acceptor in the catalytic mechanism. 2 positions are modified to N6-succinyllysine: Lys244 and Lys253.

This sequence belongs to the SMP-30/CGR1 family. In terms of assembly, monomer. The cofactor is Zn(2+). Mn(2+) serves as cofactor. Ca(2+) is required as a cofactor. It depends on Mg(2+) as a cofactor.

The protein resides in the cytoplasm. It catalyses the reaction D-glucono-1,5-lactone + H2O = D-gluconate + H(+). The protein operates within cofactor biosynthesis; L-ascorbate biosynthesis via UDP-alpha-D-glucuronate pathway; L-ascorbate from UDP-alpha-D-glucuronate: step 3/4. In terms of biological role, gluconolactonase with low activity towards other sugar lactones, including gulonolactone and galactonolactone. Catalyzes a key step in ascorbic acid (vitamin C) biosynthesis. Can also hydrolyze diisopropyl phosphorofluoridate and phenylacetate (in vitro). Calcium-binding protein. Modulates Ca(2+) signaling, and Ca(2+)-dependent cellular processes and enzyme activities. This is Regucalcin (RGN) from Oryctolagus cuniculus (Rabbit).